The primary structure comprises 211 residues: Protein GrpE (211 aa).

Residues 1-10 (MTDDTKKPGP) are compositionally biased toward basic and acidic residues. Disordered regions lie at residues 1–37 (MTDDTKKPGPDADVAEEFVDPAQAGEEQAETAEPDPV) and 187–211 (AKGGPKAEPSASAEPGTSSLNEKDA). Acidic residues predominate over residues 27-36 (EQAETAEPDP). Residues 201–211 (PGTSSLNEKDA) are compositionally biased toward polar residues.

This sequence belongs to the GrpE family. Homodimer.

The protein localises to the cytoplasm. Functionally, participates actively in the response to hyperosmotic and heat shock by preventing the aggregation of stress-denatured proteins, in association with DnaK and GrpE. It is the nucleotide exchange factor for DnaK and may function as a thermosensor. Unfolded proteins bind initially to DnaJ; upon interaction with the DnaJ-bound protein, DnaK hydrolyzes its bound ATP, resulting in the formation of a stable complex. GrpE releases ADP from DnaK; ATP binding to DnaK triggers the release of the substrate protein, thus completing the reaction cycle. Several rounds of ATP-dependent interactions between DnaJ, DnaK and GrpE are required for fully efficient folding. This Agrobacterium fabrum (strain C58 / ATCC 33970) (Agrobacterium tumefaciens (strain C58)) protein is Protein GrpE.